An 854-amino-acid chain; its full sequence is Alkaline phosphatase-like protein PglZ (854 aa).

The protein belongs to the alkaline phosphatase superfamily.

In terms of biological role, BREX systems (bacteriophage exclusion) provide immunity against bacteriophage. A core protein of a type 1 BREX system. This system allows phage adsorption but prevents phage DNA replication, without degradation of the phage DNA. Methylation of bacterial DNA by PglX probably guides self/non-self discrimination. When the brxA-brxB-brxC-pglX and pglZ-brxL operons are transformed into a susceptible B.subtilis strain (BEST7003) they confer resistance to bacteriophages SPbeta, SP16, Zeta, phi3T and SP02 and partial protection to phages SP01 and SP82G (these include lytic and temperate phage). They do not protect against phages phi105, rho10 or rho14. Additionally confers a very slight reduction in efficiency of plasmid transformation. The sequence is that of Alkaline phosphatase-like protein PglZ from Bacillus cereus (strain H3081.97).